We begin with the raw amino-acid sequence, 545 residues long: La-related protein 6B (545 aa).

A compositionally biased stretch (polar residues) spans 1-10 (MADQQTLDSS). 3 disordered regions span residues 1 to 76 (MADQ…IPPP), 105 to 187 (LVPV…DSKT), and 382 to 545 (HQTK…VQAE). The span at 23–49 (SHSTSSTTSASSSSDPSLLRSLSLSRL) shows a compositional bias: low complexity. Positions 61-76 (TTPPLPQPPRMIIPPP) are enriched in pro residues. Positions 111-126 (HHPHHRFHQHHHHNRH) are enriched in basic residues. A compositionally biased stretch (basic and acidic residues) spans 154-173 (LVSKKNDRRDHSKRESKNDQ). The span at 174–185 (VTETGASVSIDS) shows a compositional bias: polar residues. The HTH La-type RNA-binding domain maps to 187 to 278 (TGLPEDSIQK…RRISPITESA (92 aa)). Residues 285 to 383 (RIIVAENLPE…LKVRLMLKHQ (99 aa)) form the RRM domain. A compositionally biased stretch (basic residues) spans 448 to 464 (GQRKGRNRGRGKGRGRG). A compositionally biased stretch (low complexity) spans 465-478 (QPHQNQNQNNNHSH). Positions 479–497 (NQNHNHNGRGNHHHHHHHQ) are enriched in basic residues. The segment covering 498–509 (VGTQPSNNPMNN) has biased composition (polar residues). Residues 510–519 (MEQPGMGKQQ) show a composition bias toward low complexity.

Its subcellular location is the nucleus. Functionally, transcriptional regulator. In Arabidopsis thaliana (Mouse-ear cress), this protein is La-related protein 6B (LARP6B).